The following is a 545-amino-acid chain: Membrane protein insertase YidC (545 aa).

A run of 4 helical transmembrane segments spans residues 350–370 (IIGN…AVLY), 424–444 (LPML…FASV), 461–481 (ADPY…QTYL), and 498–518 (PLVF…YWVV).

It belongs to the OXA1/ALB3/YidC family. Type 1 subfamily. As to quaternary structure, interacts with the Sec translocase complex via SecD. Specifically interacts with transmembrane segments of nascent integral membrane proteins during membrane integration.

It is found in the cell inner membrane. In terms of biological role, required for the insertion and/or proper folding and/or complex formation of integral membrane proteins into the membrane. Involved in integration of membrane proteins that insert both dependently and independently of the Sec translocase complex, as well as at least some lipoproteins. Aids folding of multispanning membrane proteins. The polypeptide is Membrane protein insertase YidC (Neisseria gonorrhoeae (strain ATCC 700825 / FA 1090)).